Here is a 499-residue protein sequence, read N- to C-terminus: Maturase K (499 aa).

This sequence belongs to the intron maturase 2 family. MatK subfamily.

It is found in the plastid. Its subcellular location is the chloroplast. Usually encoded in the trnK tRNA gene intron. Probably assists in splicing its own and other chloroplast group II introns. The chain is Maturase K from Gleditsia triacanthos (Common honey-locust).